The sequence spans 359 residues: EGF-like domain containing protein 2 (359 aa).

Residues 1–20 form the signal peptide; that stretch reads MPPFISHFFLLSTFASLALC. 2 consecutive EGF-like domains span residues 21-55 and 61-93; these read SFYC…FNCG and ISAA…PTCQ. 6 cysteine pairs are disulfide-bonded: C24-C37, C31-C43, C45-C54, C65-C75, C69-C81, and C83-C92.

Prismatic layer of shell (at protein level). Expressed primarily in the mantle with highest level in the mantle edge and lower level in the mantle pallium.

It is found in the secreted. The polypeptide is EGF-like domain containing protein 2 (Margaritifera margaritifera (Freshwater pearl mussel)).